The primary structure comprises 502 residues: Lysine--tRNA ligase (502 aa).

Positions 399 and 406 each coordinate Mg(2+).

Belongs to the class-II aminoacyl-tRNA synthetase family. As to quaternary structure, homodimer. It depends on Mg(2+) as a cofactor.

It is found in the cytoplasm. It carries out the reaction tRNA(Lys) + L-lysine + ATP = L-lysyl-tRNA(Lys) + AMP + diphosphate. This Synechococcus sp. (strain RCC307) protein is Lysine--tRNA ligase.